A 164-amino-acid polypeptide reads, in one-letter code: UPF0304 protein YfbU (164 aa).

Belongs to the UPF0304 family.

In Salmonella enteritidis PT4 (strain P125109), this protein is UPF0304 protein YfbU.